Reading from the N-terminus, the 178-residue chain is Dual-action ribosomal maturation protein DarP (178 aa).

This sequence belongs to the DarP family.

The protein resides in the cytoplasm. Functionally, member of a network of 50S ribosomal subunit biogenesis factors which assembles along the 30S-50S interface, preventing incorrect 23S rRNA structures from forming. Promotes peptidyl transferase center (PTC) maturation. This chain is Dual-action ribosomal maturation protein DarP, found in Haemophilus influenzae (strain PittEE).